A 688-amino-acid chain; its full sequence is MFKKLFGQLQRIGKALMLPVAILPAAGILLAFGNAMHNEQLVEIAPWLKNDIIVMISSVMEAAGQVVFDNLPLLFAVGTALGLAGGDGVAALAALVGYLIMNATMGKVLHITIDDIFSYAKGAKELSQAAKEPAHALVLGIPTLQTGVFGGIIMGALAAWCYNKFYNITLPPFLGFFAGKRFVPIVTSVVAIATGVVLSFAWPPIQDGLNSLSNFLLNKNLTLTTFIFGIIERSLIPFGLHHIFYSPFWFEFGSYTNHAGELVRGDQRIWMAQLKDGVPFTAGAFTTGKYPFMMFGLPAAAFAIYKNARPERKKIVGGLMLSAGLTAFLTGITEPLEFSFLFVAPVLYGIHVLLAGTSFLVMHLLGVKIGMTFSGGFIDYILYGLLNWDRSHALLVIPVGIVYAIVYYFLFDFAIRKFKLKTPGREDEETEIRNSSVAKLPFDVLDAMGGKENIKHLDACITRLRVEVVDKSKVDVAGIKALGASGVLEVGNNMQAIFGPKSDQIKHDMAKIMSGEITKPSETTVTEEMSDEPVHVEALGTTDIYAPGVGQIIPLSEVPDQVFAGKMMGDGVGFIPEKGEIVAPFDGTVKTIFPTKHAIGLESESGVEVLIHIGIDTVKLNGEGFESLINVDEKVTQGQPLMKVNLAYLKAHAPSIVTPMIITNLENKELVIEDVQDADPGKLIMTVK.

Residues Lys3–Asp427 enclose the PTS EIIC type-1 domain. 10 consecutive transmembrane segments (helical) span residues Ile12 to Phe32, Leu81 to Met101, Leu137 to Leu157, Phe182 to Trp202, Leu223 to Ile243, Ala284 to Ile304, Ile315 to Pro335, Phe340 to Leu360, Leu364 to Gly384, and Leu395 to Ile415. Positions Ala438–Lys519 constitute a PTS EIIB type-1 domain. Cys460 functions as the Phosphocysteine intermediate; for EIIB activity in the catalytic mechanism. The PTS EIIA type-1 domain occupies Asp560–Asn664. The active-site Tele-phosphohistidine intermediate; for EIIA activity is His612.

The protein localises to the cell membrane. In terms of biological role, the phosphoenolpyruvate-dependent sugar phosphotransferase system (sugar PTS), a major carbohydrate active -transport system, catalyzes the phosphorylation of incoming sugar substrates concomitantly with their translocation across the cell membrane. This system is involved in alpha- and beta-glucoside transport. The sequence is that of PTS system glucoside-specific EIICBA component (glcB) from Staphylococcus aureus (strain MRSA252).